We begin with the raw amino-acid sequence, 688 residues long: Potassium-transporting ATPase ATP-binding subunit (688 aa).

A run of 4 helical transmembrane segments spans residues 34–54 (PVMF…LAIL), 62–82 (ALFT…ANFA), 219–239 (VALT…TATL), and 260–280 (VLVA…LSAI). The 4-aspartylphosphate intermediate role is filled by Asp-313. ATP is bound by residues Asp-350, Glu-354, 383–390 (FSAQTRMS), and Lys-401. Mg(2+)-binding residues include Asp-524 and Asp-528. Transmembrane regions (helical) follow at residues 594-614 (FAII…LNVM), 622-642 (AILS…PLAL), and 667-687 (GLLV…ALIM).

Belongs to the cation transport ATPase (P-type) (TC 3.A.3) family. Type IA subfamily. The system is composed of three essential subunits: KdpA, KdpB and KdpC.

Its subcellular location is the cell inner membrane. It carries out the reaction K(+)(out) + ATP + H2O = K(+)(in) + ADP + phosphate + H(+). In terms of biological role, part of the high-affinity ATP-driven potassium transport (or Kdp) system, which catalyzes the hydrolysis of ATP coupled with the electrogenic transport of potassium into the cytoplasm. This subunit is responsible for energy coupling to the transport system and for the release of the potassium ions to the cytoplasm. The protein is Potassium-transporting ATPase ATP-binding subunit of Yersinia enterocolitica serotype O:8 / biotype 1B (strain NCTC 13174 / 8081).